Consider the following 467-residue polypeptide: Probable serine hydroxymethyltransferase, cytosolic (467 aa).

An N6-(pyridoxal phosphate)lysine modification is found at Lys243.

The protein belongs to the SHMT family. In terms of assembly, homotetramer. Pyridoxal 5'-phosphate serves as cofactor.

Its subcellular location is the cytoplasm. It catalyses the reaction (6R)-5,10-methylene-5,6,7,8-tetrahydrofolate + glycine + H2O = (6S)-5,6,7,8-tetrahydrofolate + L-serine. It participates in one-carbon metabolism; tetrahydrofolate interconversion. Functionally, interconversion of serine and glycine. This is Probable serine hydroxymethyltransferase, cytosolic from Schizosaccharomyces pombe (strain 972 / ATCC 24843) (Fission yeast).